Consider the following 400-residue polypeptide: Enoyl-[acyl-carrier-protein] reductase [NADH] (400 aa).

Residues 48-53 (GSSSGY), 74-75 (FE), 111-112 (DA), and 139-140 (LA) contribute to the NAD(+) site. A substrate-binding site is contributed by Tyr-225. Tyr-235 serves as the catalytic Proton donor. NAD(+) is bound by residues Lys-244 and 273-275 (VVT).

It belongs to the TER reductase family. In terms of assembly, monomer.

The catalysed reaction is a 2,3-saturated acyl-[ACP] + NAD(+) = a (2E)-enoyl-[ACP] + NADH + H(+). Its pathway is lipid metabolism; fatty acid biosynthesis. In terms of biological role, involved in the final reduction of the elongation cycle of fatty acid synthesis (FAS II). Catalyzes the reduction of a carbon-carbon double bond in an enoyl moiety that is covalently linked to an acyl carrier protein (ACP). This Shewanella denitrificans (strain OS217 / ATCC BAA-1090 / DSM 15013) protein is Enoyl-[acyl-carrier-protein] reductase [NADH].